We begin with the raw amino-acid sequence, 415 residues long: MTLLALGINHNTATLDVREKVAFSPAELEVALCALRESGLAEEVAILSTCNRTEIYCETGAEAQHLLVWLAEHKAASAQELQHAHYARWGDDAARHMMAVASGLDSLVLGEPQILGQMKSCYAVAREAGVLGRGLHDAFQRVFAVAKRVRSETAIGENPVSVAYAAVSLAQQIFSDLKQDTALLIGAGETIELVARHLKNQGIKKLIVANRTLENAHALAKEFAAEAILLADIPEYLPTADIVISSTASQLPLLGKGAVEVALKKRKHKPMFMVDIAVPRDIEPQVGDLADVYLFTVDDLKEVIDENKKSREEAAKTARTIIDEGVERYQLDQRALSAVELVKDFRQQTEAVRDQEVQKALNALRSGADPEELLLTLSRNLTNKFMHQPTTALKRASSEGREQLLQDFKSLFGLD.

Substrate-binding positions include 49-52, Ser106, 111-113, and Gln117; these read TCNR and EPQ. Cys50 functions as the Nucleophile in the catalytic mechanism. 186–191 is an NADP(+) binding site; it reads GAGETI.

Belongs to the glutamyl-tRNA reductase family. In terms of assembly, homodimer.

It catalyses the reaction (S)-4-amino-5-oxopentanoate + tRNA(Glu) + NADP(+) = L-glutamyl-tRNA(Glu) + NADPH + H(+). It functions in the pathway porphyrin-containing compound metabolism; protoporphyrin-IX biosynthesis; 5-aminolevulinate from L-glutamyl-tRNA(Glu): step 1/2. Functionally, catalyzes the NADPH-dependent reduction of glutamyl-tRNA(Glu) to glutamate 1-semialdehyde (GSA). The sequence is that of Glutamyl-tRNA reductase from Teredinibacter turnerae (strain ATCC 39867 / T7901).